A 201-amino-acid polypeptide reads, in one-letter code: Recombination protein RecR (201 aa).

The C4-type zinc finger occupies 57 to 72 (CKSCRTFTEEDECAIC). The region spanning 81-176 (GQLCVVEMPA…KVTRIAHGIP (96 aa)) is the Toprim domain.

Belongs to the RecR family.

In terms of biological role, may play a role in DNA repair. It seems to be involved in an RecBC-independent recombinational process of DNA repair. It may act with RecF and RecO. This Glaesserella parasuis serovar 5 (strain SH0165) (Haemophilus parasuis) protein is Recombination protein RecR.